Reading from the N-terminus, the 263-residue chain is Polyglutamine-binding protein 1 (263 aa).

One can recognise a WW domain in the interval 46–80 (EGLPPSWYKVFDPSCGLPYYWNVDTDLVSWLSPHD). Phosphoserine is present on serine 94. A disordered region spans residues 94–263 (SSNADAEEKL…AEASRTKQQD (170 aa)). Positions 99 to 173 (AEEKLDRSHE…DKVDREESKE (75 aa)) are enriched in basic and acidic residues. 14 tandem repeats follow at residues 104–110 (DRSHEKS), 111–117 (DRGHEKS), 118–124 (DRGHEKS), 125–131 (DRSHEKS), 132–138 (ERNHEKS), 139–140 (DR), 141–142 (DR), 143–144 (ER), 150–151 (DR), 152–153 (ER), 154–155 (ER), 156–157 (DR), 158–159 (DR), and 160–161 (DR). A 5 X 7 AA approximate tandem repeats of D-R-[SG]-H-D-K-S region spans residues 104-138 (DRSHEKSDRGHEKSDRGHEKSDRSHEKSERNHEKS). The segment at 139 to 144 (DRDRER) is 3 X 2 AA tandem repeats of [DE]-R. The segment at 150–161 (DRERERDRDRDR) is 6 X 2 AA tandem repeats of [DE]-R. Residues 243–253 (YPSPGAVLRAN) are important for interaction with TXNL4A. The residue at position 245 (serine 245) is a Phosphoserine.

In terms of assembly, interacts with POU3F2/Brn-2, ATXN1, TXNL4A, HTT and AR. Interaction with ATXN1 correlates positively with the length of the polyglutamine tract. Interacts with RNA polymerase II large subunit in a phosphorylation-dependent manner. Forms a ternary complex with ATXN1 mutant and phosphorylated RNA polymerase II. Interacts (via C-terminus) with TXNL4A and CD2BP2. Interacts (via WW domain) with ATN1 and SF3B1, and may interact with additional splice factors. Interacts (via WW domain) with WBP11; Leading to reduce interaction between PQBP1 and TXNL4A. Interacts with CAPRIN1. Interacts with DDX1. Interacts with SFPQ. Interacts with KHSRP.

Its subcellular location is the nucleus. It localises to the nucleus speckle. The protein resides in the cytoplasmic granule. In terms of biological role, intrinsically disordered protein that acts as a scaffold, and which is involved in different processes, such as pre-mRNA splicing, transcription regulation, innate immunity and neuron development. Interacts with splicing-related factors via the intrinsically disordered region and regulates alternative splicing of target pre-mRNA species. May suppress the ability of POU3F2 to transactivate the DRD1 gene in a POU3F2 dependent manner. Can activate transcription directly or via association with the transcription machinery. May be involved in ATXN1 mutant-induced cell death. The interaction with ATXN1 mutant reduces levels of phosphorylated RNA polymerase II large subunit. Involved in the assembly of cytoplasmic stress granule, possibly by participating in the transport of neuronal RNA granules. Also acts as an innate immune sensor of infection by retroviruses, by detecting the presence of reverse-transcribed DNA in the cytosol. Directly binds retroviral reverse-transcribed DNA in the cytosol and interacts with CGAS, leading to activate the cGAS-STING signaling pathway, triggering type-I interferon production. The polypeptide is Polyglutamine-binding protein 1 (PQBP1) (Bos taurus (Bovine)).